We begin with the raw amino-acid sequence, 215 residues long: Probable ribosome-binding factor A, chloroplastic (215 aa).

The transit peptide at 1 to 52 (MPNLLHTNQSHFFFLHHPPIYTVSSKTQAFHFPQSMAPVNLRTNLSVRRTVR) directs the protein to the chloroplast. Residues 183–192 (KGSGEGKTEP) are compositionally biased toward basic and acidic residues. The segment at 183 to 210 (KGSGEGKTEPSDSTEDDQDWEVDDPDED) is disordered. Over residues 194–210 (DSTEDDQDWEVDDPDED) the composition is skewed to acidic residues.

Belongs to the RbfA family.

It is found in the plastid. It localises to the chloroplast. This Arabidopsis thaliana (Mouse-ear cress) protein is Probable ribosome-binding factor A, chloroplastic.